We begin with the raw amino-acid sequence, 132 residues long: Small ribosomal subunit protein uS13 (132 aa).

A disordered region spans residues 106–132; sequence PVRGQVTQKNARTRKGPRKTVAGKKGK. Residues 116–132 show a composition bias toward basic residues; the sequence is ARTRKGPRKTVAGKKGK.

Belongs to the universal ribosomal protein uS13 family. As to quaternary structure, part of the 30S ribosomal subunit. Forms a loose heterodimer with protein S19. Forms two bridges to the 50S subunit in the 70S ribosome.

Functionally, located at the top of the head of the 30S subunit, it contacts several helices of the 16S rRNA. In the 70S ribosome it contacts the 23S rRNA (bridge B1a) and protein L5 of the 50S subunit (bridge B1b), connecting the 2 subunits; these bridges are implicated in subunit movement. Contacts the tRNAs in the A and P-sites. The polypeptide is Small ribosomal subunit protein uS13 (Mycoplasmopsis pulmonis (strain UAB CTIP) (Mycoplasma pulmonis)).